The chain runs to 146 residues: Deoxyuridine 5'-triphosphate nucleotidohydrolase (146 aa).

Substrate-binding positions include 66-68, asparagine 79, 83-85, and lysine 93; these read RSG and TID.

The protein belongs to the dUTPase family. The cofactor is Mg(2+).

It catalyses the reaction dUTP + H2O = dUMP + diphosphate + H(+). It participates in pyrimidine metabolism; dUMP biosynthesis; dUMP from dCTP (dUTP route): step 2/2. Its function is as follows. This enzyme is involved in nucleotide metabolism: it produces dUMP, the immediate precursor of thymidine nucleotides and it decreases the intracellular concentration of dUTP so that uracil cannot be incorporated into DNA. This chain is Deoxyuridine 5'-triphosphate nucleotidohydrolase, found in Zymomonas mobilis subsp. mobilis (strain ATCC 31821 / ZM4 / CP4).